Reading from the N-terminus, the 255-residue chain is tRNA (adenine(58)-N(1))-methyltransferase TrmI (255 aa).

S-adenosyl-L-methionine-binding positions include 104–107 (SGGL), E125, H130, E155, and D170.

Belongs to the class I-like SAM-binding methyltransferase superfamily. TRM61 family. As to quaternary structure, homotetramer composed of a dimer of dimers.

It catalyses the reaction adenosine(58) in tRNA + S-adenosyl-L-methionine = N(1)-methyladenosine(58) in tRNA + S-adenosyl-L-homocysteine + H(+). In terms of biological role, catalyzes the S-adenosyl-L-methionine-dependent formation of N(1)-methyladenine at position 58 (m1A58) in tRNA. This is tRNA (adenine(58)-N(1))-methyltransferase TrmI (trmI) from Thermus thermophilus (strain ATCC 27634 / DSM 579 / HB8).